The following is a 652-amino-acid chain: Acetyl-coenzyme A synthetase (652 aa).

Residues 191–194 (RAGR), threonine 311, and asparagine 335 contribute to the CoA site. ATP-binding positions include 387 to 389 (GEP), 411 to 416 (DTWWQT), aspartate 500, and arginine 515. Serine 523 provides a ligand contact to CoA. Arginine 526 serves as a coordination point for ATP. Residues valine 537, histidine 539, and isoleucine 542 each contribute to the Mg(2+) site. CoA is bound at residue arginine 584. Lysine 609 carries the post-translational modification N6-acetyllysine.

Belongs to the ATP-dependent AMP-binding enzyme family. Mg(2+) serves as cofactor. In terms of processing, acetylated. Deacetylation by the SIR2-homolog deacetylase activates the enzyme.

The enzyme catalyses acetate + ATP + CoA = acetyl-CoA + AMP + diphosphate. Its function is as follows. Catalyzes the conversion of acetate into acetyl-CoA (AcCoA), an essential intermediate at the junction of anabolic and catabolic pathways. Acs undergoes a two-step reaction. In the first half reaction, Acs combines acetate with ATP to form acetyl-adenylate (AcAMP) intermediate. In the second half reaction, it can then transfer the acetyl group from AcAMP to the sulfhydryl group of CoA, forming the product AcCoA. In terms of biological role, enables the cell to use acetate during aerobic growth to generate energy via the TCA cycle, and biosynthetic compounds via the glyoxylate shunt. Acetylates CheY, the response regulator involved in flagellar movement and chemotaxis. The polypeptide is Acetyl-coenzyme A synthetase (Salmonella typhi).